The chain runs to 344 residues: Succinylglutamate desuccinylase (344 aa).

Zn(2+)-binding residues include histidine 63, glutamate 66, and histidine 160. Residue glutamate 224 is part of the active site.

It belongs to the AspA/AstE family. Succinylglutamate desuccinylase subfamily. The cofactor is Zn(2+).

The enzyme catalyses N-succinyl-L-glutamate + H2O = L-glutamate + succinate. Its pathway is amino-acid degradation; L-arginine degradation via AST pathway; L-glutamate and succinate from L-arginine: step 5/5. Functionally, transforms N(2)-succinylglutamate into succinate and glutamate. The chain is Succinylglutamate desuccinylase from Shewanella sp. (strain W3-18-1).